The chain runs to 128 residues: Large ribosomal subunit protein bL12c (128 aa).

The disordered stretch occupies residues 103 to 128; that stretch reads QEGLGKDAAEDAKKQIEDAGGKVSLT. The span at 106–122 shows a compositional bias: basic and acidic residues; that stretch reads LGKDAAEDAKKQIEDAG.

It belongs to the bacterial ribosomal protein bL12 family. In terms of assembly, homodimer. Part of the ribosomal stalk of the 50S ribosomal subunit. Forms a multimeric L10(L12)X complex, where L10 forms an elongated spine to which 2 to 4 L12 dimers bind in a sequential fashion. Binds GTP-bound translation factors.

The protein localises to the plastid. It is found in the chloroplast. Functionally, forms part of the ribosomal stalk which helps the ribosome interact with GTP-bound translation factors. Is thus essential for accurate translation. The chain is Large ribosomal subunit protein bL12c from Thalassiosira pseudonana (Marine diatom).